The sequence spans 191 residues: UPF0312 protein Sputw3181_1309 (191 aa).

The N-terminal stretch at 1–22 (MKKQLLSALIGVSLLVPMAASA) is a signal peptide.

The protein belongs to the UPF0312 family. Type 1 subfamily.

It localises to the periplasm. The chain is UPF0312 protein Sputw3181_1309 from Shewanella sp. (strain W3-18-1).